Consider the following 4015-residue polypeptide: MAANDSNNQTKPQLPEEPVAIVGSSCRFPGSSNSPSKLWDLLRQPRDVLKEFDPDRLNLKRFYHPDGDTHGSTDVTNKSYLLEEDSRLFDASFFTINPAEAAGMDPQQRILLETVYEAFESAGMTLEQLRGSLTAVHVGTMTNDYAGIQLRDLETIAKYNATGTANSIVSNRISYVFDLKGPSETIDTACSSSLVALHHAARGLLNGDCETAVVAGVNLIYDAASYIAESKLHMLSPDSQSRMWDKSANGYARGEGAAALLLKPLSRALRDGDHIEGVIRATGVNSDGQSPGITMPFAPTQAALIRQTYRRAGLDPVKDRPQYFECHGTGTPAGDPVEARAISEAFEPSADNPIYVGSIKTIIGHLEGCAGLAGVMKVILALKNRTIPPNMLFNELNPAIAPFYGPLQIPKKAMPWPELPENTPIRASVNSFGFGGTNAHVIIESFESSTPSSDSEKCEEGALGPLLFSAGSGASLLHTVQAYVQYLDQNPSVDLRDLSWLLQTRRSTHRVRTHFSGTSSDAILESMIKFVNNNEKTPSTEVGHQPKLINPKEVPGILGVFTGQGAQWPQMGKELIGKSPIFRRTLEDCDATLQALPSSDIPKWSLVKELMANASSSRVAEAAISQPLCTAVQLGLVNMLKASGLNFDAVVGHSSGEIAATYASGIINLQAAIQIAYYRGFHAKLAKGEKGQQGGMLAAGLTLDKAKQLCLREEFVGRLQVAASNAPQTVTLSGDLDAIEEVKKYLDEENVFARQLKVDTAYHSHHMKPCAEPYLKSLLACDIEVRKPTPGQCIWNSSVRGDTGLLKGDLSSLKGPYWVANMVQTVLFSQAVESSIWHGGPWDLAIEVGPHPALKGPTEQTLKAVYGVVPLYTGVLKRGASDVEAFSTAIGVTWSQLGPSFVDFAGYRKTFYESEPPTPKVIKDLPGYSWDHDKVYWRESRISKRYRTGRDQTHELLGRRTPDDNEFELRWRNVLKLSEMPWLRGHEVLEEVLLPGAAYVSIAVEASKHIATSKGKSIELLEVEDVDIQRPVVVPDNKEGVETLFTARLLPGSSSDKVLKALFSYYICNDQSTGTMVHTCSGRLSVHLGEAKEDVLPQRDPVPQNLVNINTDRAYGMFKDIGLNYTGVFRSIKESSRTLQYSAATGIWPEGSLSDKYLVHPAMLDVAFQTLFIARAHPASRLITSALLPSHIERIQVSPSVPILHARENSDEIKADFDCWVVHQTASSLTGDLNIYDKVSGKTFLQVEGLTTKMVGEQDASGDRPVFTKTVWGSDGSLGLDEPERDPVGDAEGLSLAEAAERMALFYMKRVVKEISPEERTKFQWYHQRMFEAFEQHLVNVGSGSHPMLKSEWLSDDSSIMDGLDRIHPTSIDLKLLRACGENMPDVVREKTQLLEVMSKDDMLNRFYMDNCAARINNDIAKVVKQISFKFPRANILEIGAGTGGTTWSILKDINDAYDSYTFTDISSGFFPKAAEKFSDFAHKMIFKTLDVEKQPSEQGFAENSYDVIVAANVLHATRSLETTLRNARSLLRPGGYLILMEITNPESLRTTFIFGGFSGWWLSEEPHRKLGPVVTAMDWDTVLNDTGYSGADMVVHDLAEESKHLTSLIVSQAVDDDFLRLREPLSNLADMSAPTESILVIGGKKLLTSKMVNEINKLLPKSWKRHISSAGSIDDIDINELKPGTEVISLQELDDPLFSTPMTAERMSTIQNLMMSAKTLLWVTTAGKSHAPRASMFHGIARIVPSELQHLQIQVLGLEAGSTPAIATRHCVEAFLRLRGTSDTTREMLWAIEPEVEIMADGQVLIPRVVPDETLNQTYNASRRVVTKTVDATDLAVEAVAGPTKMMLQTAELQAGERKTRIQVKYALHLPAMDGKGIYVVYGQRQDDTSSFVLAVSKSNSSIVDVDSKHAVSVSDNCEPATLNVLATYLIARAIATLSKQAGSVLLSEPEESLAAIVATETAKQGTQAYFLSSKKVSPVEWIKVHANASKRAIQKAVPHDVQLLIDCSGIEASGNAVMASMPLHCVERQLDAHLLFDALESTESKPESLLEEAYQYATQLITQEQVQSECEVFPASDLPLTNMLSLVHKKYVTDWQQRDSLVVSVPPLDLEGIFKADKTYLMVGAAGGLGLSICEWMIRNGAKNLIITSRKPQVDQNMIEEASRVGATVKVMAMDVSSKESVAEVVQQAQEIMPPIAGVCNAAMVLSDKMFLDMDVDQLNGTLAAKVYGTEHLDAVFADAPLDFFIVLSSTATTIGNIGQANYHVANLFMTSLVAQRRARGLAGSVIHIGYVADVGYVTRQDRERQLEQHFRNVRLMALSETDVHHAFAEAVRGGRPGNTVGSPDIIMGLEPASVPLEPERQTLWLSNPCFGHLVPSTLQNDSSQTGGTGNGSSVRRQVEEAQTEDEAVDAVLDGFCAKLEAILQLREGSVKENVQRAVIDLGIDSLVAVEIRTWFLKELGAEVPVVKILGGDTVLQICTTAAKKVMANAMKKKEEDAVAEEGGREAASKKEPAPAASAPTPAPVAPSLLDVPARAFEPDSATISEVGDDSAFSNKGSSSSATGASSPKELSDSESVPDTSKDQSHVRPETVRDERMSPAQARIWFLTKHLDDPSAYNMVFHYRVKGPLKTVRLRHALQVATGHHESLRTLFYSRLEDGQPMQGVMPASAYELKHVPGADEADLKKELALLKAREWDLENGRTFSVSVLSRAADEHDVVFGYHHIIMDVVGWYFFVRDLDRAYRMQPFDKKISGSYVDYSVMQLSQKNTAAASDDLAFWQKEFSTVPDPIPLLPIAAVSARPTDSGRKVSHHEYLELDPAQNLAVKETCEKLRISPFHFHVAVLRALIGGYTNIDDMCIGVVDANRGDERFAQTVGCFVNMLPVRVEAPSDATFADIARSASRKALMAFAHSSAPLDMILDAVKAPRSSETTPLFQVAVNYRTGGVWDLPMGDCQMKLSLTDGKDAENPFDISLGIAETGKGCVIEMHCQKTLYSSDATRTLLNTYLRLVDTFCKNTHVKLKDCVIHDQAKVSEALQIGKGPTTDFGWPSTLSHRVLETCLKSPKNAAIQFKGELLSYEQLASRIHLVAAAIVRAGASKGSRVAVLCEPSADAIISMLATLHIGGVYIPMDVSLPTARHAAMMNGGQPTLLLSHAATKHRVEDLVNETGSTISVLQVDTISSVEEKETVSCAAEPHNNAVLLFTSGSTGTPKGIMLSQANFVNHLALKTDRLQLGQENVLQQSSMGFDMSLIQMFCALANGGCLVIAPSEMRRDPVELTNLVHNSQISLTIATPSEYLAWLRYGTASLKDHTIWRHACMGGEPVSRQLKTEFWRLDLANLQLTNCYGPTEITAAATFETIRLDDQDDDNDRAQHAVGKALPNYSVRILDTAGRPQPVDHIGEICIGGASVALGYLGLPEQTKAKFTVDPVSGERLYLTGDKGKLLSDGTLLCLGRLDGDTQIKHRGLRIELQEVESALIQTANGLFSSAVVSARGSILVAHATISQSQAEPSESDLAKILSRLKLPQYFIPATIGILPTMPTTANGKLDRKAIASLPLPQKVTGEEGPQEKMNIREGELRLLWERVLPDTATTTPLGPSSDFFLCGGNSMLLMKLQAAIKESIGIEISTRVLYQASTLREMALCVDEQREEQADALEQHFDWQAETSLPKWLLDQIEDLPKTTKQPPKPNGIDILMTGATSFIGGRLLRSLVRSPSVRKVHCVAVLADEQDQLYQDEKVKCYTGSLLSSTLGLNNGERDQLARNVDVVIHAGSSGHCLNTYGSLRTPNLVSLQFLASLALPRSIPLLLLSSNRVPLLSGNTALPPTSVAAFPPATDGREGYTATKWASEVFLEKLVGAVQKKAPRPWVASVHRPCVVVSEHAPNSDALNAILRYSASMKCVPHLESATGYLDFASVESIVDSMAESAIEMATGNVTDQPSIRFQHHSGGVKVPIGDFKVHMENVYGGNFEEVHLEEWMHRAAAAGLDPLITAYMEGIIEAGAPIVFPYLGETV.

A compositionally biased stretch (polar residues) spans 1–12; sequence MAANDSNNQTKP. Positions 1–20 are disordered; the sequence is MAANDSNNQTKPQLPEEPVA. The Ketosynthase family 3 (KS3) domain occupies 16 to 445; the sequence is EEPVAIVGSS…GTNAHVIIES (430 aa). Active-site for beta-ketoacyl synthase activity residues include C190, H327, and H365. The interval 560–885 is malonyl-CoA:ACP transacylase (MAT) domain; the sequence is VFTGQGAQWP…LKRGASDVEA (326 aa). The segment at 954–1091 is N-terminal hotdog fold; it reads HELLGRRTPD…GRLSVHLGEA (138 aa). The dehydratase (DH) domain stretch occupies residues 954 to 1260; it reads HELLGRRTPD…TTKMVGEQDA (307 aa). The PKS/mFAS DH domain occupies 954-1261; it reads HELLGRRTPD…TKMVGEQDAS (308 aa). The active-site Proton acceptor; for dehydratase activity is H986. A C-terminal hotdog fold region spans residues 1106-1261; the sequence is LVNINTDRAY…TKMVGEQDAS (156 aa). The Proton donor; for dehydratase activity role is filled by D1165. Residues 1400–1598 are methyltransferase (MT) domain; sequence KDDMLNRFYM…YSGADMVVHD (199 aa). A ketoreductase (KR) domain region spans residues 2120–2261; the sequence is KTYLMVGAAG…STATTIGNIG (142 aa). The segment at 2379–2405 is disordered; it reads STLQNDSSQTGGTGNGSSVRRQVEEAQ. Positions 2409-2488 constitute a Carrier 1 domain; that stretch reads EAVDAVLDGF…QICTTAAKKV (80 aa). Position 2448 is an O-(pantetheine 4'-phosphoryl)serine (S2448). Residues 2498-2515 show a composition bias toward basic and acidic residues; it reads EDAVAEEGGREAASKKEP. 2 disordered regions span residues 2498-2529 and 2545-2597; these read EDAV…PVAP and TISE…VRDE. Residues 2553 to 2569 show a composition bias toward low complexity; that stretch reads SAFSNKGSSSSATGASS. Residues 2582–2597 show a composition bias toward basic and acidic residues; the sequence is TSKDQSHVRPETVRDE. Residues 2598-3029 form a condensation (C) domain region; that stretch reads RMSPAQARIW…HVKLKDCVIH (432 aa). The tract at residues 3063-3459 is adenylation (A) (KR) domain; the sequence is LKSPKNAAIQ…GTLLCLGRLD (397 aa). A reductase (RED) domain region spans residues 3063 to 3459; the sequence is LKSPKNAAIQ…GTLLCLGRLD (397 aa). In terms of domain architecture, Carrier 2 spans 3572 to 3651; it reads EKMNIREGEL…EMALCVDEQR (80 aa). An O-(pantetheine 4'-phosphoryl)serine modification is found at S3611.

This sequence in the C-terminal section; belongs to the NRP synthetase family.

The catalysed reaction is L-tyrosine + holo-[ACP] + 7 malonyl-CoA + acetyl-CoA + 8 AH2 + 2 S-adenosyl-L-methionine + ATP + 4 H(+) = N-[(4E,6E,10S,12Z,14E)-6,10-dimethyl-3-oxohexadeca-4,6,12,14-tetraenoyl]-L-tyrosyl-[ACP] + 8 A + AMP + 2 S-adenosyl-L-homocysteine + 7 CO2 + diphosphate + 8 CoA + 6 H2O. The protein operates within mycotoxin biosynthesis. Functionally, hybrid PKS-NRPS synthetase; part of the gene cluster that mediates the biosynthesis of ilicicolin H, a 4-hydroxy-2-pyridonealkaloid that has potent and broad antifungal activities by inhibiting the mitochondrial respiration chain. IccA assembles the backbone of ilicicolin H. The PKS portion and trans-acting enoyl reductase iccB work together to construct an octaketide, and two methyl groups are introduced by the MT domain during the chain assembly. The nascent chain is then condensed with tyrosine, catalyzed by the C domain, and the resulting PKS-NRPS hybrid is offloaded by the RED domain to form an advanced tetramic acid intermediate. The biosynthesis of ilicicolin H starts with formation of the tetramic acid by the hybrid PKS-NRPS synthetase iccA with the partnering trans-enoyl reductase iccB since iccA lacks a designated enoylreductase (ER) domain. The cytochrome P450 monooxygenase iccC then catalyzes the ring expansion of the tetramate to the acyclic 2-pyridone. The pericyclase iccD further converts the acyclic 2-pyridone into 8-epi-ilicicolin H. Finally, the epimerase iccE converts 8-epi-ilicicolin H into ilicicolin H via epimerization. IccA to iccE are sufficient for ilicicolin H biosynthesis and the roles of the remaining enzymes, iccF, iccG and iccH within the pathway have still to be determined. This chain is Hybrid PKS-NRPS synthetase iccA, found in Talaromyces variabilis (Penicillium variabile).